The primary structure comprises 306 residues: Porphobilinogen deaminase (306 aa).

The residue at position 240 (Cys240) is an S-(dipyrrolylmethanemethyl)cysteine.

It belongs to the HMBS family. In terms of assembly, monomer. The cofactor is dipyrromethane.

The enzyme catalyses 4 porphobilinogen + H2O = hydroxymethylbilane + 4 NH4(+). The protein operates within porphyrin-containing compound metabolism; protoporphyrin-IX biosynthesis; coproporphyrinogen-III from 5-aminolevulinate: step 2/4. Tetrapolymerization of the monopyrrole PBG into the hydroxymethylbilane pre-uroporphyrinogen in several discrete steps. The chain is Porphobilinogen deaminase from Thiobacillus denitrificans (strain ATCC 25259 / T1).